A 487-amino-acid chain; its full sequence is Glutamyl-tRNA(Gln) amidotransferase subunit A (487 aa).

Residues Lys-79 and Ser-158 each act as charge relay system in the active site. The Acyl-ester intermediate role is filled by Ser-182.

It belongs to the amidase family. GatA subfamily. In terms of assembly, heterotrimer of A, B and C subunits.

It catalyses the reaction L-glutamyl-tRNA(Gln) + L-glutamine + ATP + H2O = L-glutaminyl-tRNA(Gln) + L-glutamate + ADP + phosphate + H(+). In terms of biological role, allows the formation of correctly charged Gln-tRNA(Gln) through the transamidation of misacylated Glu-tRNA(Gln) in organisms which lack glutaminyl-tRNA synthetase. The reaction takes place in the presence of glutamine and ATP through an activated gamma-phospho-Glu-tRNA(Gln). The sequence is that of Glutamyl-tRNA(Gln) amidotransferase subunit A from Ehrlichia ruminantium (strain Welgevonden).